A 756-amino-acid polypeptide reads, in one-letter code: MGTRILDLLQLQNLTKRDPSAYKEEFLLQYQHYLTQLQIFQLKPTKEFKHFSQLVSYLSHVCVCYPKELSEFPKQISDLLENNCNNLEPELRRILAKSLILMRNRNLLPQIQMLSLFFKLFRVHDKPLRSLLYSHIVADIKNTNLKQKNQKLNRTLQNFMFTMMNDDSEIASKMSLKVMIELFRKKIWHDTKTVNVISNGVFSKNSKILITTLNFFLHIDNPDKPDEEEEDEAVKEKRAKDNFRKKSLAHRVGKKTKGRITRLAKSKVDLKKAKQEEDNKLQPNFPAIELIHDPQGYCDKLFNVLVKTTEKFETRIMIMNFISRLIYVHKLMVYNFYPFLQKYLQPHQKNITYLLAVLAQSCHELVDPDVLKPLVMTIAKYFVNDGCGSDVIAIGLNTIRSICSRCPLAIDTVLLADLIQYREKKEKGVAMASKSLLQFFKDNYPSMLPKKERGKNKTDIGLLAFGHQKVSQGIDGLDLLMDEELNARLDAIEAGEEFESDDDSDSDSDDEGWEDVNTTTADDDNNSEWVSDDDDEEGEEDEEVEDEEDEEEVDEEELEDDEEGDWESGEEIEGDDDDDEEWEEVEEEVEEEEEEEIKPTKKKSQQKEKVEVLRTDDIKVLTDEELIRIRKLRILKEARENNKQYEDMDQDDDENGENVHGLIRPEDLQGAHKKKKEEKLERIARAKEGRDGGYGSKASRRDKTGKSTTNEYKAKVTKPFVLTLKTKKVRGKSLKSFRDKQIGQREHSARQKRGRH.

The stretch at E227–Q282 forms a coiled coil. Acidic residues-rich tracts occupy residues A494–E514 and A521–E596. Disordered regions lie at residues A494 to T615 and A638 to H756. Residues Q605–T615 show a composition bias toward basic and acidic residues. Residues D647 to G656 show a composition bias toward acidic residues. A compositionally biased stretch (basic and acidic residues) spans E677–D691. Residues K725–K735 are compositionally biased toward basic residues. A compositionally biased stretch (basic and acidic residues) spans S736–A749.

Belongs to the SDA1 family.

It localises to the nucleus. The protein resides in the nucleolus. In terms of biological role, required for 60S pre-ribosomal subunits export to the cytoplasm. The polypeptide is Protein SDA1 homolog (sdad1) (Dictyostelium discoideum (Social amoeba)).